A 125-amino-acid chain; its full sequence is Small ribosomal subunit protein bS6 (125 aa).

The segment at 96–125 (VTEASPMKAAKEERKPLAEVENNDFEDAEE) is disordered. The segment covering 104 to 113 (AAKEERKPLA) has biased composition (basic and acidic residues). Acidic residues predominate over residues 116 to 125 (ENNDFEDAEE).

The protein belongs to the bacterial ribosomal protein bS6 family.

Its function is as follows. Binds together with bS18 to 16S ribosomal RNA. The protein is Small ribosomal subunit protein bS6 of Haemophilus influenzae (strain 86-028NP).